The sequence spans 309 residues: Porphobilinogen deaminase (309 aa).

Residue cysteine 241 is modified to S-(dipyrrolylmethanemethyl)cysteine.

The protein belongs to the HMBS family. In terms of assembly, monomer. Dipyrromethane serves as cofactor.

It catalyses the reaction 4 porphobilinogen + H2O = hydroxymethylbilane + 4 NH4(+). It functions in the pathway porphyrin-containing compound metabolism; protoporphyrin-IX biosynthesis; coproporphyrinogen-III from 5-aminolevulinate: step 2/4. In terms of biological role, tetrapolymerization of the monopyrrole PBG into the hydroxymethylbilane pre-uroporphyrinogen in several discrete steps. The sequence is that of Porphobilinogen deaminase from Bacillus mycoides (strain KBAB4) (Bacillus weihenstephanensis).